The primary structure comprises 135 residues: Ig heavy chain V region XIG14 (135 aa).

The N-terminal stretch at Asp-1–Ser-18 is a signal peptide. The Ig-like domain maps to Thr-20–Gly-128.

In Xenopus laevis (African clawed frog), this protein is Ig heavy chain V region XIG14.